The primary structure comprises 942 residues: UvrABC system protein A (942 aa).

31–38 (GLSGSGKS) contributes to the ATP binding site. Residues 253-280 (CSECGYSLPELEPRLFSFNNPAGACPTC) form a C4-type zinc finger. ABC transporter domains follow at residues 310-586 (WDRR…EASI) and 606-936 (YDAN…RFLT). Residue 639–646 (GVSGSGKS) coordinates ATP. A C4-type zinc finger spans residues 739–765 (CEACQGDGVIKVEMHFLPDVYVPCDHC).

The protein belongs to the ABC transporter superfamily. UvrA family. As to quaternary structure, forms a heterotetramer with UvrB during the search for lesions.

The protein resides in the cytoplasm. In terms of biological role, the UvrABC repair system catalyzes the recognition and processing of DNA lesions. UvrA is an ATPase and a DNA-binding protein. A damage recognition complex composed of 2 UvrA and 2 UvrB subunits scans DNA for abnormalities. When the presence of a lesion has been verified by UvrB, the UvrA molecules dissociate. This is UvrABC system protein A from Haemophilus ducreyi (strain 35000HP / ATCC 700724).